Here is a 1031-residue protein sequence, read N- to C-terminus: MAAATGLEEAVAPMGALCGLVQDFVMGQQEGPADQVAADVKSGGYTVLQVVEALGSSLENAEPRTRARGAQLLSQVLLQCHSLLSEKEVVHLILFYENRLKDHHLVVPSVLQGLRALSMSVALPPGLAVSVLKAIFQEVHVQSLLQVDRHTVFSIITNFMRSREEELKGLGADFTFGFIQVMDGEKDPRNLLLAFRIVHDLISKDYSLGPFVEELFEVTSCYFPIDFTPPPNDPYGIQREDLILSLRAVLASTPRFAEFLLPLLIEKVDSEILSAKLDSLQTLNACCAVYGQKELKDFLPSLWASIRREVFQTASERVEAEGLAALHSLTACLSCSVLRADAEDLLGSFLSNILQDCRHHLCEPDMKLVWPSAKLLQAAAGASARACEHLTSNVLPLLLEQFHKHSQSNQRRTILEMILGFLKLQQKWSYEDRDERPLSSFKDQLCSLVFMALTDPSTQLQLVGIRTLTVLGAQPGLLSAEDLELAVGHLYRLTFLEEDSQSCRVAALEASGTLATLYPGAFSRHLLPKLAEELHKGESDVARADGPTKCSRHFRCLQALSAVSTHPSIVKETLPLLLQHLCQANKGNMVTESSEVVAVCQSLQQVAEKCQQDPESYWYFHKTAVPCLFALAVQASMPEKESSVLRKVLLEDEVLAALASVIGTATTHLSPELAAQSVTCIVPLFLDGNTSFLPENSFPDQFQPFQDGSSGQRRLVALLTAFVCSLPRNVEIPQLNRLMRELLKQSCGHSCPFSSTAATKCFAGLLNKQPPGQQLEEFLQLAVGTVEAGLASESSRDQAFTLLLWVTKALVLRYHPLSACLTTRLMGLLSDPELGCAAADGFSLLMSDCTDVLTRAGHADVRIMFRQRFFTDNVPALVQGFHAAPQDVKPNYLKGLSHVLNRLPKPVLLPELPTLLSLLLEALSCPDSVVQLSTLSCLQPLLLEAPQIMSLHVDTLVTKFLNLSSSYSMAVRIAALQCMHALTRLPTSVLLPYKSQVIRALAKPLDDKKRLVRKEAVSARGEWFLLGSPGS.

Residue Ala-2 is modified to N-acetylalanine. HEAT repeat units lie at residues Gln-867–Lys-905, Leu-909–Gln-947, Ser-950–Ser-988, and Leu-991–Pro-1029. Ser-1028 carries the phosphoserine modification.

It belongs to the MET18/MMS19 family. Component of the CIA complex. In the CIA complex, interacts directly with CIAO2B and CIAO3. Component of the MMXD complex, composed of CIAO1, ERCC2, CIAO2B, MMS19 and SLC25A5. Interacts with CIAO2B; the interaction is direct. Interacts with ERCC2/XPD; the interaction is direct. Interacts with ERCC3/XPB and NCOA3/RAC3. Interacts with RTEL1; the interaction mediates the association of RTEL1 with the CIA complex. Interacts with BRIP1. Interacts with KIF4A; the interaction facilitates the transfer of Fe-S clusters to KIF4A to ensure proper localization of KIF4A to the mitotic machinery components. Interacts with CCDC117; the interaction is indirect. In terms of processing, ubiquitinated; undergoes 'Lys-48'-linked polyubiquitination. Ubiquitously expressed with higher expression in testis.

Its subcellular location is the nucleus. The protein resides in the cytoplasm. The protein localises to the cytoskeleton. It localises to the spindle. In terms of biological role, key component of the cytosolic iron-sulfur protein assembly (CIA) complex, a multiprotein complex that mediates the incorporation of iron-sulfur cluster into apoproteins specifically involved in DNA metabolism and genomic integrity. In the CIA complex, MMS19 acts as an adapter between early-acting CIA components and a subset of cellular target Fe/S proteins such as ERCC2/XPD, FANCJ and RTEL1, thereby playing a key role in nucleotide excision repair (NER), homologous recombination-mediated double-strand break DNA repair, DNA replication and RNA polymerase II (POL II) transcription. As a CIA complex component and in collaboration with CIAO1 and CIAO2, binds to and facilitates the assembly of most cytosolic-nuclear Fe/S proteins. As part of the mitotic spindle-associated MMXD complex, plays a role in chromosome segregation, probably by facilitating iron-sulfur cluster assembly into ERCC2/XPD. Together with CIAO2, facilitates the transfer of Fe-S clusters to the motor protein KIF4A, which ensures proper localization of KIF4A to mitotic machinery components to promote the progression of mitosis. Indirectly acts as a transcriptional coactivator of estrogen receptor (ER), via its role in iron-sulfur insertion into some component of the TFIIH-machinery. The polypeptide is MMS19 nucleotide excision repair protein homolog (Mus musculus (Mouse)).